An 814-amino-acid polypeptide reads, in one-letter code: Oxysterol-binding protein-related protein 1C (814 aa).

The PH domain occupies 103–235 (GNGIAGILYK…WVEALQAVKD (133 aa)). Residues 300–367 (LLIDTLRQLE…AEEEFDEEEN (68 aa)) adopt a coiled-coil conformation. 2 disordered regions span residues 319–366 (VVDE…DEEE) and 379–411 (SSFK…PSIK). Residues 347–366 (ESDDDNERGDAAEEEFDEEE) are compositionally biased toward acidic residues. The segment covering 379–394 (SSFKSSGSGFRTSSFS) has biased composition (low complexity). Residues 395–407 (SDEDGFESEDDID) are compositionally biased toward acidic residues.

This sequence belongs to the OSBP family. Expressed in roots, leaves, stems, flowers and pollen.

Its function is as follows. May be involved in the transport of sterols. The protein is Oxysterol-binding protein-related protein 1C (ORP1C) of Arabidopsis thaliana (Mouse-ear cress).